We begin with the raw amino-acid sequence, 340 residues long: N-acetyl-gamma-glutamyl-phosphate reductase (340 aa).

The active site involves Cys-151.

The protein belongs to the NAGSA dehydrogenase family. Type 1 subfamily.

The protein resides in the cytoplasm. The enzyme catalyses N-acetyl-L-glutamate 5-semialdehyde + phosphate + NADP(+) = N-acetyl-L-glutamyl 5-phosphate + NADPH + H(+). The protein operates within amino-acid biosynthesis; L-arginine biosynthesis; N(2)-acetyl-L-ornithine from L-glutamate: step 3/4. In terms of biological role, catalyzes the NADPH-dependent reduction of N-acetyl-5-glutamyl phosphate to yield N-acetyl-L-glutamate 5-semialdehyde. This is N-acetyl-gamma-glutamyl-phosphate reductase from Aquifex aeolicus (strain VF5).